We begin with the raw amino-acid sequence, 144 residues long: Protein MIX23 (144 aa).

An N-acetylalanine modification is found at alanine 2. Positions 82-120 form a coiled coil; the sequence is VKNLREEREKNLDDLTLLKQLRKEQTKLKWMQSELNVEE. Lysine 100 is modified (N6-acetyllysine).

It belongs to the MIX23 family.

This Homo sapiens (Human) protein is Protein MIX23.